Consider the following 514-residue polypeptide: Prolyl 3,4-dihydroxylase OGFOD1 (514 aa).

The Fe2OG dioxygenase domain occupies 114-221; sequence GAVDCSCNIY…RVSISGWFHT (108 aa). The Fe cation site is built by His-132 and Asp-134. Tyr-146 lines the 2-oxoglutarate pocket. His-200 is a Fe cation binding site. Arg-212 is a 2-oxoglutarate binding site.

It belongs to the TPA1 family. In terms of assembly, monomer and homodimer. It depends on Fe(2+) as a cofactor. Requires L-ascorbate as cofactor.

The catalysed reaction is [ribosomal protein uS12]-L-proline + 2-oxoglutarate + O2 = [ribosomal protein uS12]-(3S)-3-hydroxy-L-proline + succinate + CO2. It catalyses the reaction [ribosomal protein uS12]-(3S)-3-hydroxy-L-proline + 2-oxoglutarate + O2 = [ribosomal protein uS12]-(3S)-3,4-dihydroxy-L-proline + succinate + CO2. In terms of biological role, prolyl 3,4-dihydroxylase that catalyzes 3,4-dihydroxylation of 'Pro-61' of small ribosomal subunit uS12 (RPS23), thereby regulating protein translation termination efficiency. The sequence is that of Prolyl 3,4-dihydroxylase OGFOD1 (Ogd) from Ostreococcus tauri.